The chain runs to 240 residues: Orotidine 5'-phosphate decarboxylase (240 aa).

Residues D10, K32, D59–T68, T122, R183, Q192, G212, and R213 each bind substrate. K61 (proton donor) is an active-site residue.

It belongs to the OMP decarboxylase family. Type 1 subfamily. As to quaternary structure, homodimer.

The catalysed reaction is orotidine 5'-phosphate + H(+) = UMP + CO2. It functions in the pathway pyrimidine metabolism; UMP biosynthesis via de novo pathway; UMP from orotate: step 2/2. Catalyzes the decarboxylation of orotidine 5'-monophosphate (OMP) to uridine 5'-monophosphate (UMP). The protein is Orotidine 5'-phosphate decarboxylase of Carboxydothermus hydrogenoformans (strain ATCC BAA-161 / DSM 6008 / Z-2901).